Consider the following 456-residue polypeptide: ATP synthase subunit beta 1 (456 aa).

152 to 159 contacts ATP; that stretch reads GGAGVGKS.

The protein belongs to the ATPase alpha/beta chains family. F-type ATPases have 2 components, CF(1) - the catalytic core - and CF(0) - the membrane proton channel. CF(1) has five subunits: alpha(3), beta(3), gamma(1), delta(1), epsilon(1). CF(0) has three main subunits: a(1), b(2) and c(9-12). The alpha and beta chains form an alternating ring which encloses part of the gamma chain. CF(1) is attached to CF(0) by a central stalk formed by the gamma and epsilon chains, while a peripheral stalk is formed by the delta and b chains.

The protein resides in the cell membrane. It carries out the reaction ATP + H2O + 4 H(+)(in) = ADP + phosphate + 5 H(+)(out). Its function is as follows. Produces ATP from ADP in the presence of a proton gradient across the membrane. The catalytic sites are hosted primarily by the beta subunits. The chain is ATP synthase subunit beta 1 from Listeria monocytogenes serotype 4b (strain F2365).